Consider the following 137-residue polypeptide: Basic phospholipase A2 DsM-S1 (137 aa).

Residues 1–16 (MRTLWIVAVCLIGVEG) form the signal peptide. Disulfide bonds link C42–C131, C44–C60, C59–C111, C65–C137, C66–C104, C73–C97, and C91–C102. Ca(2+) contacts are provided by Y43, G45, and G47. H63 is a catalytic residue. D64 serves as a coordination point for Ca(2+). Residue D105 is part of the active site.

This sequence belongs to the phospholipase A2 family. Group II subfamily. D49 sub-subfamily. Requires Ca(2+) as cofactor. As to expression, expressed by the venom gland.

The protein localises to the secreted. The enzyme catalyses a 1,2-diacyl-sn-glycero-3-phosphocholine + H2O = a 1-acyl-sn-glycero-3-phosphocholine + a fatty acid + H(+). Snake venom phospholipase A2 (PLA2) that is neurotoxic. PLA2 catalyzes the calcium-dependent hydrolysis of the 2-acyl groups in 3-sn-phosphoglycerides. In Daboia siamensis (Eastern Russel's viper), this protein is Basic phospholipase A2 DsM-S1.